The chain runs to 324 residues: Polyketide biosynthesis acyltransferase homolog BaeD (324 aa).

S99 is an active-site residue.

The protein localises to the cytoplasm. It functions in the pathway antibiotic biosynthesis; bacillaene biosynthesis. Functionally, probably involved in some intermediate steps for the synthesis of the antibiotic polyketide bacillaene which is involved in secondary metabolism. The polypeptide is Polyketide biosynthesis acyltransferase homolog BaeD (baeD) (Bacillus velezensis (strain DSM 23117 / BGSC 10A6 / LMG 26770 / FZB42) (Bacillus amyloliquefaciens subsp. plantarum)).